The sequence spans 63 residues: uncharacterized protein (63 aa).

This is an uncharacterized protein from Dictyostelium discoideum (Social amoeba).